A 1125-amino-acid chain; its full sequence is Transcription-repair-coupling factor (1125 aa).

The region spanning 597–758 (DMMSFKVMDR…LIKLRDISVL (162 aa)) is the Helicase ATP-binding domain. 610-617 (GDVGFGKT) contacts ATP. A DEEQ box motif is present at residues 711–714 (DEEQ). Residues 774–933 (SFSELLIKHA…GFKIAMKDME (160 aa)) enclose the Helicase C-terminal domain.

This sequence in the N-terminal section; belongs to the UvrB family. The protein in the C-terminal section; belongs to the helicase family. RecG subfamily.

The protein resides in the cytoplasm. Couples transcription and DNA repair by recognizing RNA polymerase (RNAP) stalled at DNA lesions. Mediates ATP-dependent release of RNAP and its truncated transcript from the DNA, and recruitment of nucleotide excision repair machinery to the damaged site. The protein is Transcription-repair-coupling factor of Borreliella burgdorferi (strain ATCC 35210 / DSM 4680 / CIP 102532 / B31) (Borrelia burgdorferi).